An 83-amino-acid chain; its full sequence is uncharacterized protein (83 aa).

Belongs to the BolA/IbaG family.

This is an uncharacterized protein from Acinetobacter guillouiae (Acinetobacter genomosp. 11).